We begin with the raw amino-acid sequence, 121 residues long: Protein SNORC (121 aa).

Residues 1–24 (MASCLALRVALLLISGVLAPAVLT) form the signal peptide. The Extracellular segment spans residues 25–92 (AEGPQEPDPT…QDGGSLGPGA (68 aa)). The tract at residues 26 to 84 (EGPQEPDPTLWNEPIELPSGEGPLESTSHNQEFAVSGPPFPTSAPAPEDSTPPARVDQD) is disordered. The helical transmembrane segment at 93 to 113 (IAAIVIAALLATCVVLALVVV) threads the bilayer. The Cytoplasmic segment spans residues 114–121 (ALRKFSAS).

As to quaternary structure, interacts (via the extracellular domain) with FGF2. Expressed only in cartilage, including nasal, knee epiphyseal and rib tissues. In proliferation and hypertrophic chondrocytes, detected intracellulary and in the pericellular extracellular matrix. In primary spongiosa, detected only in the extracellular matrix.

It localises to the membrane. The protein localises to the cytoplasm. The protein resides in the secreted. It is found in the extracellular space. Its subcellular location is the extracellular matrix. In terms of biological role, plays a role in the regulation of chondrocyte maturation and postnatal endochondral ossification. May inhibit cell growth stimulation induced by FGF2. The protein is Protein SNORC of Mus musculus (Mouse).